A 370-amino-acid chain; its full sequence is D-alanine--D-alanine ligase (370 aa).

Residues 144 to 352 form the ATP-grasp domain; it reads KKIFADAGIP…YGALIERLVD (209 aa). 177 to 232 is an ATP binding site; the sequence is EEVLTYPVFVKPANLGSSVGISKATNKKELADAMTEAFLYDRRVVVEQGVVAREIE. Mg(2+) is bound by residues Asp-306, Glu-319, and Asn-321.

It belongs to the D-alanine--D-alanine ligase family. Requires Mg(2+) as cofactor. It depends on Mn(2+) as a cofactor.

It is found in the cytoplasm. It carries out the reaction 2 D-alanine + ATP = D-alanyl-D-alanine + ADP + phosphate + H(+). The protein operates within cell wall biogenesis; peptidoglycan biosynthesis. Functionally, cell wall formation. This Listeria monocytogenes serotype 4b (strain F2365) protein is D-alanine--D-alanine ligase.